The primary structure comprises 617 residues: MPTVVNPPRDPNTLSNYNNWVSTHITANFDILFDQRKLAGSVIHQFRSTTHGESNHIILDTNHLDIGSVKVNGQPSEWEYLPRLEPYGTPLKIKLDQGVKLNEMIEVDISVKTTEKCTALQWLTPAQTSNKKHPYMFSQCQAIHARSIFPCQDTPDVKCTLDFNITSPLPVIASGLPVRGSSEAPKSDGKTLYKFHQKVPIPSYLFALASGDISEAPIGPRSVVATSPDKLGECQWELEADTEKFINAIEKIVYPYVWGEYNVLILPPSFPYGGMENPIFTFATPSIISKDRENIDVIAHELAHSWSGNLVTNASWEHFWLNEGWTTYLERRIVAAVHGEPYRHFSAIIGWKALTDSVEHFGPEHDFTKLITNLKGMDPDDAFSSIPYEKGFNFLFHLENLVGKSKFDLFIPHYFNKYKGKSLDSYEFKSTILDFFKDDSEASTALNELDWDSWFYAPGLPPKPDFDTSLVDVVYDLAKKWLSLPNSSFKPQPEDIRGLTANQVVVFLEQILVSERQLTPELSKLMGEIYGLAASQNIEVANLYFQVGLQAGDASVLEPTADLLGKIGRMKFVRPLYRKLAKFDRKRAVETFEKHRDFYHPICRAMVEKDLFGKKDE.

A peptide contacts are provided by residues Gln-139–Gln-141 and Pro-271–Glu-276. His-300 contributes to the Zn(2+) binding site. Residue Glu-301 is the Proton acceptor of the active site. Zn(2+)-binding residues include His-304 and Glu-323. The Proton donor role is filled by Tyr-388.

The protein belongs to the peptidase M1 family. Requires Zn(2+) as cofactor.

The protein localises to the cytoplasm. It is found in the nucleus. It catalyses the reaction an epoxide + H2O = an ethanediol. In terms of biological role, aminopeptidase that preferentially cleaves di- and tripeptides. Also has low epoxide hydrolase activity (in vitro). Can hydrolyze the epoxide leukotriene LTA(4) but it forms preferentially 5,6-dihydroxy-7,9,11,14-eicosatetraenoic acid rather than the cytokine leukotriene B(4) as the product compared to the homologous mammalian enzyme (in vitro). The polypeptide is Leucine aminopeptidase 2 (Neosartorya fischeri (strain ATCC 1020 / DSM 3700 / CBS 544.65 / FGSC A1164 / JCM 1740 / NRRL 181 / WB 181) (Aspergillus fischerianus)).